The primary structure comprises 344 residues: Microcin C7 self-immunity protein MccF (344 aa).

Belongs to the peptidase S66 family.

Functionally, involved in specific self-immunity to microcin C7. This is Microcin C7 self-immunity protein MccF (mccF) from Escherichia coli.